The chain runs to 364 residues: Glycine oxidase (364 aa).

FAD contacts are provided by residues 12-13 (VI), 32-33 (ER), 40-41 (AS), 45-47 (GGI), and Val173. Substrate is bound at residue Arg302. Position 327-333 (327-333 (HYRNGLV)) interacts with FAD.

The protein belongs to the DAO family. ThiO subfamily. In terms of assembly, monomer. The cofactor is FAD.

The catalysed reaction is glycine + O2 + H2O = glyoxylate + H2O2 + NH4(+). The enzyme catalyses sarcosine + O2 + H2O = methylamine + glyoxylate + H2O2. It participates in cofactor biosynthesis; thiamine diphosphate biosynthesis. Catalyzes the oxidation of glycine, leading to glyoxyl imine and hydrogen peroxide as primary products; glyoxyl imine is used for the biosynthesis of the thiazole ring of thiamine. Otherwise, glyoxyl imine is spontaneously hydrolyzed in water to produce glyoxylate and ammonia. Can also use sarcosine (N-methylglycine) as substrate. This is Glycine oxidase from Pseudomonas aeruginosa (strain ATCC 15692 / DSM 22644 / CIP 104116 / JCM 14847 / LMG 12228 / 1C / PRS 101 / PAO1).